The following is a 544-amino-acid chain: Protein anon-37Cs (544 aa).

The protein localises to the cytoplasm. Its function is as follows. Has a non-vital function. The chain is Protein anon-37Cs (anon-37Cs) from Drosophila lebanonensis (Fruit fly).